The primary structure comprises 410 residues: Sporulation killing factor maturation protein SkfB (410 aa).

Positions 103–314 (SYLPISCTLQ…LREARHKWGD (212 aa)) constitute a Radical SAM core domain. [4Fe-4S] cluster-binding residues include Cys117, Cys121, Cys124, Cys380, Cys385, and Cys387.

The protein belongs to the radical SAM superfamily. It depends on [4Fe-4S] cluster as a cofactor.

Its subcellular location is the cytoplasm. Catalyzes the formation of the thioether bond required for production of the sporulation killing factor (SKF) from SkfA. Forms the cysteine-methionine thioether bond found in SKF; the acceptor amino acid can be hydrophobic, aromatic or a small hydrophilic amino acid but not a larger hydrophilic amino acid, i.e. Met=Ala, Phe, Leu, Tyr&gt;Asn, Ser&gt;&gt;Gln, Glu, Lys. The relative position of Cys and Met in the substrate cannot be inverted, in vitro the thioether bond cannot be made in the absence of the SkfA propeptide, suggesting this is the first reaction in SKF maturation. In vitro, in the absence of a second substrate, cleaves S-adenosyl-L-methionine into Met and 5'-dA. The polypeptide is Sporulation killing factor maturation protein SkfB (Bacillus subtilis (strain 168)).